The following is a 192-amino-acid chain: Anthranilate synthase component 2 (192 aa).

The 192-residue stretch at 1 to 192 (MIVLVNNRDS…KNFVEMSRNG (192 aa)) folds into the Glutamine amidotransferase type-1 domain. An L-glutamine-binding site is contributed by 50–52 (GPG). Cys-78 acts as the Nucleophile; for GATase activity in catalysis. L-glutamine-binding positions include Gln-82 and 127 to 128 (SL). Catalysis depends on for GATase activity residues His-165 and Glu-167.

As to quaternary structure, heterotetramer consisting of two non-identical subunits: a beta subunit (TrpG) and a large alpha subunit (TrpE).

The catalysed reaction is chorismate + L-glutamine = anthranilate + pyruvate + L-glutamate + H(+). The protein operates within amino-acid biosynthesis; L-tryptophan biosynthesis; L-tryptophan from chorismate: step 1/5. Its function is as follows. Part of a heterotetrameric complex that catalyzes the two-step biosynthesis of anthranilate, an intermediate in the biosynthesis of L-tryptophan. In the first step, the glutamine-binding beta subunit (TrpG) of anthranilate synthase (AS) provides the glutamine amidotransferase activity which generates ammonia as a substrate that, along with chorismate, is used in the second step, catalyzed by the large alpha subunit of AS (TrpE) to produce anthranilate. In the absence of TrpG, TrpE can synthesize anthranilate directly from chorismate and high concentrations of ammonia. The polypeptide is Anthranilate synthase component 2 (trpG) (Thermococcus kodakarensis (strain ATCC BAA-918 / JCM 12380 / KOD1) (Pyrococcus kodakaraensis (strain KOD1))).